A 236-amino-acid polypeptide reads, in one-letter code: 5'-methylthioadenosine/S-adenosylhomocysteine nucleosidase (236 aa).

The active-site Proton acceptor is the Glu12. Substrate-binding positions include Gly78, Ile153, and 174–175 (ME). Residue Asp198 is the Proton donor of the active site.

The protein belongs to the PNP/UDP phosphorylase family. MtnN subfamily.

The catalysed reaction is S-adenosyl-L-homocysteine + H2O = S-(5-deoxy-D-ribos-5-yl)-L-homocysteine + adenine. It carries out the reaction S-methyl-5'-thioadenosine + H2O = 5-(methylsulfanyl)-D-ribose + adenine. It catalyses the reaction 5'-deoxyadenosine + H2O = 5-deoxy-D-ribose + adenine. It participates in amino-acid biosynthesis; L-methionine biosynthesis via salvage pathway; S-methyl-5-thio-alpha-D-ribose 1-phosphate from S-methyl-5'-thioadenosine (hydrolase route): step 1/2. Catalyzes the irreversible cleavage of the glycosidic bond in both 5'-methylthioadenosine (MTA) and S-adenosylhomocysteine (SAH/AdoHcy) to adenine and the corresponding thioribose, 5'-methylthioribose and S-ribosylhomocysteine, respectively. Also cleaves 5'-deoxyadenosine, a toxic by-product of radical S-adenosylmethionine (SAM) enzymes, into 5-deoxyribose and adenine. This chain is 5'-methylthioadenosine/S-adenosylhomocysteine nucleosidase, found in Shewanella baltica (strain OS185).